The primary structure comprises 208 residues: LexA repressor (208 aa).

The H-T-H motif DNA-binding region spans 30-50; that stretch reads VREICAAVKLSSTSTVHGHLA. Active-site for autocatalytic cleavage activity residues include Ser129 and Lys167.

This sequence belongs to the peptidase S24 family. Homodimer.

It catalyses the reaction Hydrolysis of Ala-|-Gly bond in repressor LexA.. Functionally, represses a number of genes involved in the response to DNA damage (SOS response), including recA and lexA. In the presence of single-stranded DNA, RecA interacts with LexA causing an autocatalytic cleavage which disrupts the DNA-binding part of LexA, leading to derepression of the SOS regulon and eventually DNA repair. This is LexA repressor from Lactobacillus helveticus (strain DPC 4571).